Here is a 1604-residue protein sequence, read N- to C-terminus: Metabotropic glutamate receptor-like protein R (1604 aa).

An N-terminal signal peptide occupies residues 1–27; it reads MVIKKPFIFIFICFLICLLICIDLTNC. Residues 28–1149 lie on the Extracellular side of the membrane; the sequence is NTINNNNNNN…TDVSKTKIAK (1122 aa). The segment covering 38–69 has biased composition (low complexity); the sequence is NNNNNNNNNNNNNNNNNNNNNNNNNNNNNNDN. The disordered stretch occupies residues 38-72; that stretch reads NNNNNNNNNNNNNNNNNNNNNNNNNNNNNNDNNEN. Positions 98–133 form a coiled coil; that stretch reads DFYINKIKKEIKDREKYKNNIENEILKINSQKKRKK. Residues 213 to 263 are disordered; it reads NNNNNNNNNNNNNNNNNNKNNNNNNNNKNNNNNNNNKNNNNNNNNKNNNKN. N-linked (GlcNAc...) asparagine glycosylation is found at N285, N327, N359, N375, N489, N498, N525, N577, N593, N624, N768, N837, N841, N851, N864, N876, N885, N888, N913, N967, N991, N1097, and N1109. The chain crosses the membrane as a helical span at residues 1150–1170; it reads IIIGISAIIVSIGVLITAILT. Topologically, residues 1171 to 1184 are cytoplasmic; that stretch reads FIYRKRKIMRYSNP. Residues 1185 to 1205 form a helical membrane-spanning segment; that stretch reads VFLLIILVGCVCGLVSTFVSF. The Extracellular portion of the chain corresponds to 1206-1211; the sequence is STTSAT. Residues 1212 to 1232 form a helical membrane-spanning segment; sequence CSIRMVLIPLFFFIITSAIFI. Residues 1233-1256 are Cytoplasmic-facing; it reads KQYRVYCLIRGVEELHDMSIENSY. A helical membrane pass occupies residues 1257–1277; it reads LLKLQSFILIIPAILIAVSVI. The Extracellular portion of the chain corresponds to 1278 to 1304; the sequence is ATRMHRKYNFDLQKETIQAYCYSKNFY. The helical transmembrane segment at 1305-1325 threads the bilayer; that stretch reads IIFICLALYEFSILLYGCWIV. Residues 1326-1340 lie on the Cytoplasmic side of the membrane; that stretch reads IKCRQYRSFPGSFNE. Residues 1341–1361 form a helical membrane-spanning segment; the sequence is FFYIGVLIYVLTVILVVSIPI. Topologically, residues 1362–1372 are extracellular; the sequence is GFALLNSALTD. A helical transmembrane segment spans residues 1373 to 1393; it reads FLLYSIPILVLIVAIIGLLFA. Residues 1394 to 1604 lie on the Cytoplasmic side of the membrane; the sequence is PKFYFLFRTD…KSSQNSPLLD (211 aa). A disordered region spans residues 1457–1604; that stretch reads TGSNTSDDVS…KSSQNSPLLD (148 aa). Low complexity-rich tracts occupy residues 1471–1527 and 1534–1556; these read FDSP…NKNN and SSSN…GRSS. Residues 1563-1572 are compositionally biased toward basic residues; sequence NNKKNRRKNS. Residues 1573 to 1584 are compositionally biased toward polar residues; it reads LRTPILNSLLSP.

This sequence belongs to the G-protein coupled receptor 3 family. GABA-B receptor subfamily.

It is found in the membrane. This Dictyostelium discoideum (Social amoeba) protein is Metabotropic glutamate receptor-like protein R (grlR).